The sequence spans 51 residues: Lysis protein for colicin A (51 aa).

Residues 1–18 form the signal peptide; sequence MKKIIICVILLAIMLLAA. Residue Cys19 is the site of N-palmitoyl cysteine attachment. Residue Cys19 is the site of S-diacylglycerol cysteine attachment. Residues 27 to 51 form a disordered region; it reads TGGGSVSPSSIVTGVSMGSDGVGNP.

Its subcellular location is the cell outer membrane. Its function is as follows. Lysis proteins are required for both colicin release and partial cell lysis. This is Lysis protein for colicin A (cal) from Citrobacter freundii.